Here is a 515-residue protein sequence, read N- to C-terminus: Bifunctional purine biosynthesis protein PurH (515 aa).

One can recognise an MGS-like domain in the interval 1–145 (MTKRALISVS…KNHASVTVVV (145 aa)).

The protein belongs to the PurH family.

It carries out the reaction (6R)-10-formyltetrahydrofolate + 5-amino-1-(5-phospho-beta-D-ribosyl)imidazole-4-carboxamide = 5-formamido-1-(5-phospho-D-ribosyl)imidazole-4-carboxamide + (6S)-5,6,7,8-tetrahydrofolate. The catalysed reaction is IMP + H2O = 5-formamido-1-(5-phospho-D-ribosyl)imidazole-4-carboxamide. It functions in the pathway purine metabolism; IMP biosynthesis via de novo pathway; 5-formamido-1-(5-phospho-D-ribosyl)imidazole-4-carboxamide from 5-amino-1-(5-phospho-D-ribosyl)imidazole-4-carboxamide (10-formyl THF route): step 1/1. The protein operates within purine metabolism; IMP biosynthesis via de novo pathway; IMP from 5-formamido-1-(5-phospho-D-ribosyl)imidazole-4-carboxamide: step 1/1. This chain is Bifunctional purine biosynthesis protein PurH, found in Streptococcus gordonii (strain Challis / ATCC 35105 / BCRC 15272 / CH1 / DL1 / V288).